We begin with the raw amino-acid sequence, 402 residues long: S-adenosylmethionine synthase (402 aa).

Residue H15 coordinates ATP. D17 provides a ligand contact to Mg(2+). Position 43 (E43) interacts with K(+). E56 and Q99 together coordinate L-methionine. Residues 99 to 109 (QSPDIAQGVDT) are flexible loop. Residues 174 to 176 (DGK), 247 to 248 (RF), D256, 262 to 263 (RK), A279, and K283 contribute to the ATP site. D256 provides a ligand contact to L-methionine. Residue K287 participates in L-methionine binding.

It belongs to the AdoMet synthase family. As to quaternary structure, homotetramer; dimer of dimers. The cofactor is Mg(2+). Requires K(+) as cofactor.

The protein localises to the cytoplasm. It catalyses the reaction L-methionine + ATP + H2O = S-adenosyl-L-methionine + phosphate + diphosphate. It functions in the pathway amino-acid biosynthesis; S-adenosyl-L-methionine biosynthesis; S-adenosyl-L-methionine from L-methionine: step 1/1. Its function is as follows. Catalyzes the formation of S-adenosylmethionine (AdoMet) from methionine and ATP. The overall synthetic reaction is composed of two sequential steps, AdoMet formation and the subsequent tripolyphosphate hydrolysis which occurs prior to release of AdoMet from the enzyme. The sequence is that of S-adenosylmethionine synthase from Streptomyces griseus subsp. griseus (strain JCM 4626 / CBS 651.72 / NBRC 13350 / KCC S-0626 / ISP 5235).